The chain runs to 80 residues: Conotoxin MaIr193 (80 aa).

The N-terminal stretch at 1 to 22 (MKLTCMMIVAVLFLTAWTLVTA) is a signal peptide. The propeptide occupies 23 to 51 (DGTRDGLKNRFPKARLEMKNSEAPRSRGR). 3 cysteine pairs are disulfide-bonded: cysteine 52/cysteine 69, cysteine 59/cysteine 73, and cysteine 68/cysteine 77. Position 64 is a 4-hydroxyproline (proline 64).

This sequence belongs to the conotoxin O1 superfamily. Expressed by the venom duct.

It is found in the secreted. This is Conotoxin MaIr193 from Conus marmoreus (Marble cone).